The chain runs to 649 residues: Lipolysis-stimulated lipoprotein receptor (649 aa).

The segment covering 1–16 (MQQDGLGVGTRNGSGK) has biased composition (gly residues). A disordered region spans residues 1–21 (MQQDGLGVGTRNGSGKGRSVH). Over 1–259 (MQQDGLGVGT…PGFQAGPIED (259 aa)) the chain is Extracellular. The Ig-like V-type domain occupies 86 to 234 (PARAIQVTVS…DLQGNNEAYA (149 aa)). Residues Cys111 and Cys218 are joined by a disulfide bond. Residues 260–280 (WLFVVVVCLAAFLIFLLLGIC) traverse the membrane as a helical segment. Topologically, residues 281-649 (WCQCCPHTCC…LALSRESLVV (369 aa)) are cytoplasmic. At Thr336 the chain carries Phosphothreonine. 5 positions are modified to phosphoserine: Ser365, Ser371, Ser389, Ser432, and Ser436. The tract at residues 414 to 649 (NFDPSRPGPP…LALSRESLVV (236 aa)) is disordered. Positions 426-444 (RVERAMSEVTSLHEDDWRS) are enriched in basic and acidic residues. Thr453 carries the post-translational modification Phosphothreonine. Phosphoserine is present on residues Ser464, Ser467, and Ser493. Phosphothreonine is present on Thr501. Residues 502–518 (PPSTAESGSRSPTSNGG) are compositionally biased toward polar residues. Residues Ser528 and Ser530 each carry the phosphoserine modification. Residues 529 to 565 (RSRDDLYDQDDSRDFPRSRDPHYDDFRSRERPPADPR) are compositionally biased toward basic and acidic residues. Tyr535 bears the Phosphotyrosine mark. Ser540 and Ser579 each carry phosphoserine. The segment covering 589–609 (RLLEEAVRKKGSEERRRPHKE) has biased composition (basic and acidic residues). Residue Ser631 is modified to Phosphoserine. Residue Lys638 forms a Glycyl lysine isopeptide (Lys-Gly) (interchain with G-Cter in ubiquitin) linkage. Ser643 and Ser646 each carry phosphoserine.

The protein belongs to the immunoglobulin superfamily. LISCH7 family. As to quaternary structure, homotrimer or homotetramer. Assembles into cell-cell contacts. Interacts (via the cytoplasmic domain) with MARVELD2 (via C-terminal cytoplasmic domain); the interaction is required to recruit MARVELD2 to tricellular contacts. Interacts with OCLN. Post-translationally, phosphorylation at Ser-365 by MAPK8/JNK1 and MAPK9/JNK2 may be required for exclusive localization at tricellular tight junstions. Polyubiquitinated at Lys-638 via 'Lys-63'-linked ubiquitin chains; deubiquitinated by USP53.

It localises to the cell membrane. It is found in the cell junction. Its subcellular location is the tight junction. Probable role in the clearance of triglyceride-rich lipoprotein from blood. Binds chylomicrons, LDL and VLDL in presence of free fatty acids and allows their subsequent uptake in the cells. Maintains epithelial barrier function by recruiting MARVELD2/tricellulin to tricellular tight junctions. This is Lipolysis-stimulated lipoprotein receptor from Homo sapiens (Human).